A 224-amino-acid polypeptide reads, in one-letter code: Precorrin-2 dehydrogenase (224 aa).

NAD(+) is bound by residues 26-27 (SV) and 47-50 (EFSQ).

This sequence belongs to the precorrin-2 dehydrogenase / sirohydrochlorin ferrochelatase family. As to quaternary structure, homodimer.

The catalysed reaction is precorrin-2 + NAD(+) = sirohydrochlorin + NADH + 2 H(+). The protein operates within porphyrin-containing compound metabolism; siroheme biosynthesis; sirohydrochlorin from precorrin-2: step 1/1. In terms of biological role, involved in the archaeal biosynthesis of heme. Catalyzes the oxiation of precorrin-2 into sirohydroclorin. This Methanosarcina barkeri (strain Fusaro / DSM 804) protein is Precorrin-2 dehydrogenase.